The sequence spans 310 residues: Fe-S cluster assembly protein dre2 (310 aa).

Disordered regions lie at residues 1 to 30 and 165 to 184; these read MAPS…GKRT and APAP…DDND. The N-terminal SAM-like domain stretch occupies residues 24–154; sequence ADSGKRTLLL…KMDVGNGAAV (131 aa). A linker region spans residues 155 to 202; sequence PLRLGRKKKAAPAPAPVVQPPPIISSDDNDLNDDELIDEDTLLSADDL. Pro residues predominate over residues 167-177; it reads APAPVVQPPPI. The [2Fe-2S] cluster site is built by Cys212, Cys223, Cys226, and Cys228. The fe-S binding site A stretch occupies residues 212 to 228; sequence CQPKAGKRRRACKDCTC. Residues Cys273, Cys276, Cys284, and Cys287 each coordinate [4Fe-4S] cluster. 2 short sequence motifs (cx2C motif) span residues 273-276 and 284-287; these read CGNC and CDGC. The fe-S binding site B stretch occupies residues 273–287; the sequence is CGNCALGDAFRCDGC.

It belongs to the anamorsin family. As to quaternary structure, monomer. Interacts with tah18. Interacts with mia40. Requires [2Fe-2S] cluster as cofactor. The cofactor is [4Fe-4S] cluster.

Its subcellular location is the cytoplasm. The protein localises to the mitochondrion intermembrane space. Its function is as follows. Component of the cytosolic iron-sulfur (Fe-S) protein assembly (CIA) machinery required for the maturation of extramitochondrial Fe-S proteins. Part of an electron transfer chain functioning in an early step of cytosolic Fe-S biogenesis, facilitating the de novo assembly of a [4Fe-4S] cluster on the scaffold complex cfd1-nbp35. Electrons are transferred to dre2 from NADPH via the FAD- and FMN-containing protein tah18. Tah18-dre2 are also required for the assembly of the diferric tyrosyl radical cofactor of ribonucleotide reductase (RNR), probably by providing electrons for reduction during radical cofactor maturation in the catalytic small subunit rnr2. The polypeptide is Fe-S cluster assembly protein dre2 (Emericella nidulans (strain FGSC A4 / ATCC 38163 / CBS 112.46 / NRRL 194 / M139) (Aspergillus nidulans)).